Here is a 521-residue protein sequence, read N- to C-terminus: GMP synthase [glutamine-hydrolyzing] (521 aa).

Residues 5 to 197 (KILILDFGSQ…VLDICGAQPG (193 aa)) enclose the Glutamine amidotransferase type-1 domain. Catalysis depends on Cys81, which acts as the Nucleophile. Active-site residues include His171 and Glu173. The 193-residue stretch at 198–390 (WTMPNYIEEA…LGLPREMVYR (193 aa)) folds into the GMPS ATP-PPase domain. Residue 225 to 231 (SGGVDSS) participates in ATP binding.

Homodimer.

The enzyme catalyses XMP + L-glutamine + ATP + H2O = GMP + L-glutamate + AMP + diphosphate + 2 H(+). It functions in the pathway purine metabolism; GMP biosynthesis; GMP from XMP (L-Gln route): step 1/1. Its function is as follows. Catalyzes the synthesis of GMP from XMP. The sequence is that of GMP synthase [glutamine-hydrolyzing] from Neisseria gonorrhoeae (strain NCCP11945).